The following is a 265-amino-acid chain: Diphthine synthase (265 aa).

Residues leucine 9, aspartate 85, isoleucine 88, 113–114 (TA), leucine 168, alanine 211, and histidine 236 each bind S-adenosyl-L-methionine.

This sequence belongs to the diphthine synthase family. Homodimer.

The enzyme catalyses 2-[(3S)-amino-3-carboxypropyl]-L-histidyl-[translation elongation factor 2] + 3 S-adenosyl-L-methionine = diphthine-[translation elongation factor 2] + 3 S-adenosyl-L-homocysteine + 3 H(+). It participates in protein modification; peptidyl-diphthamide biosynthesis. In terms of biological role, S-adenosyl-L-methionine-dependent methyltransferase that catalyzes the trimethylation of the amino group of the modified target histidine residue in translation elongation factor 2 (EF-2), to form an intermediate called diphthine. The three successive methylation reactions represent the second step of diphthamide biosynthesis. The protein is Diphthine synthase of Halorubrum lacusprofundi (strain ATCC 49239 / DSM 5036 / JCM 8891 / ACAM 34).